The primary structure comprises 259 residues: MDPKLLFLPRFQPVDLTPAWSQINLFEGIRFAFAIYSRDYSKPLLHFQKRWALAVLDLKENSPPIYILKQLAELLKNKVCYHPPMFVSQPDLARENDQHVFVYLSREKMQKVLKEQSITFGMEAVLATTIQPYRSELALQEMLRVHNLAWPHSRTEEPDLECFIAIFASSLFIHLLELKVTNVYGREVACTFFLRRGTENRPYDVVACGTTQFTKNALGISRPAASSPEPDLTLRLSGPDQEGEEGVMKPAAVNLKKEA.

The disordered stretch occupies residues 219-259; that stretch reads GISRPAASSPEPDLTLRLSGPDQEGEEGVMKPAAVNLKKEA.

It catalyses the reaction O-phospho-L-tyrosyl-[protein] + H2O = L-tyrosyl-[protein] + phosphate. In terms of biological role, induces differentiation and growth of neoplastic roots (hairy roots). Seems to function as a tyrosine phosphatase. The polypeptide is Protein-tyrosine phosphatase RolB (rolB) (Rhizobium rhizogenes (Agrobacterium rhizogenes)).